Consider the following 474-residue polypeptide: 3-isopropylmalate dehydratase large subunit (474 aa).

Residues Cys-355, Cys-415, and Cys-418 each contribute to the [4Fe-4S] cluster site.

The protein belongs to the aconitase/IPM isomerase family. LeuC type 1 subfamily. In terms of assembly, heterodimer of LeuC and LeuD. The cofactor is [4Fe-4S] cluster.

It carries out the reaction (2R,3S)-3-isopropylmalate = (2S)-2-isopropylmalate. It functions in the pathway amino-acid biosynthesis; L-leucine biosynthesis; L-leucine from 3-methyl-2-oxobutanoate: step 2/4. Catalyzes the isomerization between 2-isopropylmalate and 3-isopropylmalate, via the formation of 2-isopropylmaleate. The polypeptide is 3-isopropylmalate dehydratase large subunit (Shewanella sp. (strain W3-18-1)).